The sequence spans 513 residues: Cytochrome P450 monooxygenase asaD (513 aa).

A helical transmembrane segment spans residues 14-34 (ILYPFLFGIFAVASLCIATLL). Asn258, Asn370, Asn431, and Asn441 each carry an N-linked (GlcNAc...) asparagine glycan. Position 461 (Cys461) interacts with heme.

Belongs to the cytochrome P450 family. Requires heme as cofactor.

It is found in the membrane. The protein operates within secondary metabolite biosynthesis. In terms of biological role, cytochrome P450 monooxygenase; part of the gene cluster that mediates the biosynthesis of aspergillic acid, a hydroxamic acid-containing pyrazinone with aliphatic side chains that originates from leucine (Leu) and isoleucine (Ile). Aspergillic acid has antibiotic properties and was shown to be lethal to mice. The first step in the pathway is the production of deoxyaspergillic acid via a condensation between the Ile amine and the Leu carboxylic acid, followed by a reductive release from the protein forming the dipeptide aldehyde NH(2)-Leu-Ile-CHO, which could undergo an intermolecular cyclization resulting in a dihydropyrazinone. As the NRPS asaC lacks a condensation domain, it is improbable that it is responsible for condensation of Leu and Ile. One possibility is that asaC acts on a previously condensed dipeptide and functions as a Leu-Ile reductase to yield deoxyaspergillic acid. After asaC forms deoxyaspergillic acid, the cytochrome P450 asaD oxidizes the pyrazinone to the hydroxamic acid-containing bioactive metabolite aspergillic acid. The hydroxylase/desaturase asaB can then convert aspergillic acid to hydroxyaspergillic acid. Both aspergillic acid and hydroxyaspergillic acid can form complexes with iron producing ferriaspergillin analogs. This chain is Cytochrome P450 monooxygenase asaD, found in Aspergillus flavus (strain ATCC 200026 / FGSC A1120 / IAM 13836 / NRRL 3357 / JCM 12722 / SRRC 167).